Reading from the N-terminus, the 482-residue chain is Zinc finger CCCH domain-containing protein 40 (482 aa).

The C3H1-type zinc-finger motif lies at 157 to 184 (RNRAHVCSFYVRGECTRGAECPYRHEMP). Residues 228-301 (RTLYIGGLNN…IRLKLMWGKP (74 aa)) enclose the RRM domain. 2 stretches are compositionally biased toward low complexity: residues 329–347 (SQQQSGDQPQPPGMEGQQQ) and 389–428 (PGPQQAAQAQASSSSGQSYPMPPQYYHGQYPPYYPPYGGY). Residues 329–482 (SQQQSGDQPQ…VPPPQQTTQN (154 aa)) form a disordered region. A compositionally biased stretch (pro residues) spans 429–446 (MPPPRMPYPPPPQYPPYQ). Positions 452–466 (PAQSQASSSQQPAPA) are enriched in low complexity. Over residues 473-482 (VPPPQQTTQN) the composition is skewed to pro residues.

This Oryza sativa subsp. japonica (Rice) protein is Zinc finger CCCH domain-containing protein 40.